We begin with the raw amino-acid sequence, 191 residues long: Phosphoheptose isomerase (191 aa).

In terms of domain architecture, SIS spans 37 to 191; that stretch reads IAESFKQDGK…IIQLIEKEME (155 aa). 52-54 contributes to the substrate binding site; that stretch reads NGG. The Zn(2+) site is built by H61 and E65. Substrate contacts are provided by residues E65, 93–94, 119–121, S124, and Q172; these read ND and STS. Residues Q172 and H180 each coordinate Zn(2+).

This sequence belongs to the SIS family. GmhA subfamily. Homotetramer. Zn(2+) serves as cofactor.

It localises to the cytoplasm. The enzyme catalyses 2 D-sedoheptulose 7-phosphate = D-glycero-alpha-D-manno-heptose 7-phosphate + D-glycero-beta-D-manno-heptose 7-phosphate. It participates in carbohydrate biosynthesis; D-glycero-D-manno-heptose 7-phosphate biosynthesis; D-glycero-alpha-D-manno-heptose 7-phosphate and D-glycero-beta-D-manno-heptose 7-phosphate from sedoheptulose 7-phosphate: step 1/1. It functions in the pathway bacterial outer membrane biogenesis; LPS core biosynthesis. Its function is as follows. Catalyzes the isomerization of sedoheptulose 7-phosphate in D-glycero-D-manno-heptose 7-phosphate. This is Phosphoheptose isomerase from Vibrio vulnificus (strain CMCP6).